The chain runs to 70 residues: DNA gyrase inhibitor YacG (70 aa).

Cys-9, Cys-12, Cys-28, and Cys-32 together coordinate Zn(2+). Positions 43 to 70 (ESRKIPGSSIDPESIVTSNNKQDNEDEQ) are disordered.

This sequence belongs to the DNA gyrase inhibitor YacG family. Interacts with GyrB. It depends on Zn(2+) as a cofactor.

Functionally, inhibits all the catalytic activities of DNA gyrase by preventing its interaction with DNA. Acts by binding directly to the C-terminal domain of GyrB, which probably disrupts DNA binding by the gyrase. The protein is DNA gyrase inhibitor YacG of Legionella pneumophila (strain Paris).